We begin with the raw amino-acid sequence, 416 residues long: Enterobactin exporter EntS (416 aa).

Residues 1–21 (MNKQSWLLNLSLLKTHPAFRA) are Cytoplasmic-facing. The chain crosses the membrane as a helical span at residues 22-42 (VFLARFISIVSLGLLGVAVPV). Residues 43 to 55 (QIQMMTHSTWQVG) lie on the Periplasmic side of the membrane. The helical transmembrane segment at 56 to 76 (LSVTLTGGAMFVGLMVGGVLA) threads the bilayer. Residues 77 to 83 (DRYERKK) are Cytoplasmic-facing. A helical membrane pass occupies residues 84–104 (VILLARGTCGIGFIGLCLNAL). Over 105–109 (LPEPS) the chain is Periplasmic. A helical transmembrane segment spans residues 110–130 (LLAIYLLGLWDGFFASLGVTA). Residues 131–156 (LLAATPALVGRENLMQAGALTMLTVR) are Cytoplasmic-facing. The helical transmembrane segment at 157–177 (LGSVISPMIGGLLLATGGVAW) threads the bilayer. Residue Asn178 is a topological domain, periplasmic. Residues 179 to 199 (YGLAAAGTFITLLPLLSLPAL) form a helical membrane-spanning segment. Residues 200 to 218 (PPPPQPREHPLKSLLAGFR) lie on the Cytoplasmic side of the membrane. Residues 219-239 (FLLASPLVGGIALLGGLLTMA) traverse the membrane as a helical segment. At 240–256 (SAVRVLYPALADNWQMS) the chain is on the periplasmic side. The chain crosses the membrane as a helical span at residues 257-277 (AAEIGFLYAAIPLGAAIGALT). The Cytoplasmic segment spans residues 278–287 (SGKLAHSARP). The chain crosses the membrane as a helical span at residues 288 to 307 (GLLMLLSTLGSFLAIGLFGL). Residues 308–313 (MPMWIL) lie on the Periplasmic side of the membrane. A helical membrane pass occupies residues 314-336 (GVVCLALFGWLSAVSSLLQYTML). Topologically, residues 337–356 (QTQTPEAMLGRINGLWTAQN) are cytoplasmic. Residues 357 to 377 (VTGDAIGAALLGGLGAMMTPV) traverse the membrane as a helical segment. A topological domain (periplasmic) is located at residue Ala378. Residues 379–399 (SASASGFGLLIIGVLLLLVLV) traverse the membrane as a helical segment. At 400 to 416 (ELRRFRQTPPQVTASDS) the chain is on the cytoplasmic side.

It belongs to the major facilitator superfamily. EntS (TC 2.A.1.38) family.

It localises to the cell inner membrane. Component of an export pathway for enterobactin. This Shigella boydii serotype 18 (strain CDC 3083-94 / BS512) protein is Enterobactin exporter EntS.